The primary structure comprises 313 residues: Acetaldehyde dehydrogenase 3 (313 aa).

Residue 11–14 coordinates NAD(+); the sequence is SGNI. The Acyl-thioester intermediate role is filled by cysteine 129. Residues 160–168 and asparagine 288 each bind NAD(+); that span reads SAGPGTRAN.

Belongs to the acetaldehyde dehydrogenase family.

The catalysed reaction is acetaldehyde + NAD(+) + CoA = acetyl-CoA + NADH + H(+). The protein is Acetaldehyde dehydrogenase 3 of Rhizorhabdus wittichii (strain DSM 6014 / CCUG 31198 / JCM 15750 / NBRC 105917 / EY 4224 / RW1) (Sphingomonas wittichii).